The primary structure comprises 231 residues: Cytochrome c oxidase assembly factor 7 (231 aa).

Residue Ala-2 is modified to N-acetylalanine. Sel1-like repeat units follow at residues 34 to 66 (PEGC…EKYG), 68 to 104 (GDSC…EKPG), 108 to 146 (VESC…DGGY), 147 to 183 (AASC…DLGH), and 184 to 219 (VWAC…QLHK).

The protein belongs to the hcp beta-lactamase family. As to quaternary structure, interacts with CHCHD4/MIA40 through transient intermolecular disulfide bonds.

The protein localises to the mitochondrion intermembrane space. In terms of biological role, required for assembly of mitochondrial respiratory chain complex I and complex IV. The protein is Cytochrome c oxidase assembly factor 7 (Coa7) of Mus musculus (Mouse).